Consider the following 117-residue polypeptide: Immunoglobulin heavy variable 1-58 (117 aa).

Positions 1 to 19 (MDWIWRILFLVGAATGAHS) are cleaved as a signal peptide. Residues 20–44 (QMQLVQSGPEVKKPGTSVKVSCKAS) form a framework-1 region. Residues 20–117 (QMQLVQSGPE…EDTAVYYCAA (98 aa)) form the Ig-like domain. A disulfide bridge links cysteine 41 with cysteine 115. A complementarity-determining-1 region spans residues 45-52 (GFTFTSSA). Residues 53–69 (VQWVRQARGQRLEWIGW) are framework-2. The tract at residues 70-77 (IVVGSGNT) is complementarity-determining-2. A framework-3 region spans residues 78–115 (NYAQKFQERVTITRDMSTSTAYMELSSLRSEDTAVYYC). The tract at residues 116–117 (AA) is complementarity-determining-3.

Immunoglobulins are composed of two identical heavy chains and two identical light chains; disulfide-linked.

The protein localises to the secreted. The protein resides in the cell membrane. Its function is as follows. V region of the variable domain of immunoglobulin heavy chains that participates in the antigen recognition. Immunoglobulins, also known as antibodies, are membrane-bound or secreted glycoproteins produced by B lymphocytes. In the recognition phase of humoral immunity, the membrane-bound immunoglobulins serve as receptors which, upon binding of a specific antigen, trigger the clonal expansion and differentiation of B lymphocytes into immunoglobulins-secreting plasma cells. Secreted immunoglobulins mediate the effector phase of humoral immunity, which results in the elimination of bound antigens. The antigen binding site is formed by the variable domain of one heavy chain, together with that of its associated light chain. Thus, each immunoglobulin has two antigen binding sites with remarkable affinity for a particular antigen. The variable domains are assembled by a process called V-(D)-J rearrangement and can then be subjected to somatic hypermutations which, after exposure to antigen and selection, allow affinity maturation for a particular antigen. This is Immunoglobulin heavy variable 1-58 from Homo sapiens (Human).